A 590-amino-acid chain; its full sequence is 4-oxocyclohex-2-ene-1-carboxylate 5-dehydrogenase (590 aa).

The protein belongs to the FAD-dependent oxidoreductase 2 family. Forms multimers. FAD serves as cofactor.

It catalyses the reaction 4-oxocyclohex-2-ene-1-carboxylate + NAD(+) = 4-oxocyclohexa-2,5-diene-1-carboxylate + NADH + H(+). Desaturase involved in a cyclohexanecarboxylate (CHCA) degradation pathway. Probably catalyzes the conversion of 4-oxocyclohexenecarboxylate to 4-oxocyclohex-2,5-dienecarboxylate, which is spontaneously isomerized to 4-hydroxybenzoate (4-HBA). This is 4-oxocyclohex-2-ene-1-carboxylate 5-dehydrogenase from Sinomonas cyclohexanicum (Corynebacterium cyclohexanicum).